Reading from the N-terminus, the 549-residue chain is Glucose-6-phosphate isomerase (549 aa).

3 positions are modified to N6-acetyllysine: Lys-80, Lys-228, and Lys-234. Residue Glu-355 is the Proton donor of the active site. Catalysis depends on residues His-386 and Lys-514.

This sequence belongs to the GPI family.

It is found in the cytoplasm. The catalysed reaction is alpha-D-glucose 6-phosphate = beta-D-fructose 6-phosphate. It functions in the pathway carbohydrate biosynthesis; gluconeogenesis. Its pathway is carbohydrate degradation; glycolysis; D-glyceraldehyde 3-phosphate and glycerone phosphate from D-glucose: step 2/4. In terms of biological role, catalyzes the reversible isomerization of glucose-6-phosphate to fructose-6-phosphate. The protein is Glucose-6-phosphate isomerase of Escherichia coli (strain SE11).